The primary structure comprises 600 residues: Adenine deaminase 3 (600 aa).

This sequence belongs to the metallo-dependent hydrolases superfamily. Adenine deaminase family. It depends on Mn(2+) as a cofactor.

It catalyses the reaction adenine + H2O + H(+) = hypoxanthine + NH4(+). The polypeptide is Adenine deaminase 3 (Rhizobium johnstonii (strain DSM 114642 / LMG 32736 / 3841) (Rhizobium leguminosarum bv. viciae)).